The primary structure comprises 460 residues: C4-dicarboxylate transport protein (460 aa).

The next 9 helical transmembrane spans lie at 20–40, 56–76, 88–108, 153–173, 200–220, 234–254, 301–321, 342–362, and 364–384; these read SLYF…HFYP, LIKM…IAGM, YALL…LIVV, IVGA…VIFG, IINM…AFTI, LMIC…GAIC, VVGL…SIYL, ITLL…TGSG, and IVLA…LALI. Positions 438–460 are disordered; it reads PEDDLGVAEGPTPANAVNTTKTV.

This sequence belongs to the dicarboxylate/amino acid:cation symporter (DAACS) (TC 2.A.23) family.

It is found in the cell inner membrane. In terms of biological role, responsible for the transport of dicarboxylates such as succinate, fumarate, and malate from the periplasm across the membrane. The polypeptide is C4-dicarboxylate transport protein (Pseudomonas savastanoi pv. phaseolicola (strain 1448A / Race 6) (Pseudomonas syringae pv. phaseolicola (strain 1448A / Race 6))).